The following is a 211-amino-acid chain: Large ribosomal subunit protein uL4 (211 aa).

A disordered region spans residues 40 to 87 (QQAHTRQGTASTLTRSEVRGGGRKPYKQKGTGRARQGSIRTPLRPGGG). The segment covering 41 to 54 (QAHTRQGTASTLTR) has biased composition (polar residues). Basic residues predominate over residues 60–71 (GGRKPYKQKGTG).

It belongs to the universal ribosomal protein uL4 family. As to quaternary structure, part of the 50S ribosomal subunit.

Functionally, one of the primary rRNA binding proteins, this protein initially binds near the 5'-end of the 23S rRNA. It is important during the early stages of 50S assembly. It makes multiple contacts with different domains of the 23S rRNA in the assembled 50S subunit and ribosome. In terms of biological role, forms part of the polypeptide exit tunnel. The sequence is that of Large ribosomal subunit protein uL4 from Synechococcus sp. (strain WH7803).